Here is a 773-residue protein sequence, read N- to C-terminus: Ethylene receptor 2 (773 aa).

4 helical membrane-spanning segments follow: residues 4–24 (EIAS…VLAI), 53–73 (VSDF…LYFV), 82–102 (WVLF…LLHG), and 122–142 (LTAL…PLLL). Cu cation-binding residues include cysteine 94 and histidine 98. Positions 187 to 331 (DRHTILYTTL…VVADQVTVAL (145 aa)) constitute a GAF domain. Residues 374-614 (TMSEGMRRPM…PETMSLLLRF (241 aa)) enclose the Histidine kinase domain. Positions 647–766 (QVLLVDTNDS…AMESELRRVL (120 aa)) constitute a Response regulatory domain. Aspartate 702 bears the 4-aspartylphosphate mark. Residue lysine 751 forms a Glycyl lysine isopeptide (Lys-Gly) (interchain with G-Cter in ubiquitin) linkage.

This sequence belongs to the ethylene receptor family. Heteromer with ETR1. Binds to MRF3/ECIP1. It depends on Cu cation as a cofactor. In terms of processing, autophosphorylated predominantly on Ser residues. Expressed in seedlings, roots, leaves, flowers, mature siliques, shoot apical meristems, leaf primordia, inflorescence meristems, young floral meristems, developing petals, carpels and ovules. Low expression in stamens.

The protein resides in the endoplasmic reticulum membrane. Its function is as follows. Ethylene receptor related to bacterial two-component regulators. Acts as a redundant negative regulator of ethylene signaling. This Arabidopsis thaliana (Mouse-ear cress) protein is Ethylene receptor 2.